A 557-amino-acid polypeptide reads, in one-letter code: MTDNNKYRDVEIRAPRGNKLTAKSWLTEAPLRMLMNNLDPQVAENPKELVVYGGIGRAARNWECYDKIVETLTRLEDDETLLVQSGKPVGVFKTHSNAPRVLIANSNLVPHWANWEHFNELDAKGLAMYGQMTAGSWIYIGSQGIVQGTYETFVEAGRQHYGGSLKGKWVLTAGLGGMGGAQPLAATLAGACSLNIECQQSRIDFRLETRYVDEQATDLDDALARIAKYTAEGKAISIALHGNAAEILPELVKRGVRPDMVTDQTSAHDPLNGYLPAGWTWEQYRDRAQTEPAAVVKAAKQSMAVHVQAMLDFQKQGIPTFDYGNNIRQMAKEEGVANAFDFPGFVPAYIRPLFCRGIGPFRWAALSGEAEDIYKTDAKVKELIPDDAHLHRWLDMARERISFQGLPARICWVGLGLRAKLGLAFNEMVRSGELSAPVVIGRDHLDSGSVSSPNRETEAMRDGSDAVSDWPLLNALLNTAGGATWVSLHHGGGVGMGFSQHSGMVIVCDGTDEAAERIARVLTNDPGTGVMRHADAGYDIAIDCAKEQGLDLPMITG.

NAD(+) contacts are provided by residues 53 to 54 (GG), Q131, 177 to 179 (GMG), E197, R202, 243 to 244 (NA), 264 to 268 (QTSAH), 274 to 275 (YL), and Y323. Residue C411 is part of the active site. G493 is an NAD(+) binding site.

The protein belongs to the urocanase family. NAD(+) serves as cofactor.

It is found in the cytoplasm. The catalysed reaction is 4-imidazolone-5-propanoate = trans-urocanate + H2O. The protein operates within amino-acid degradation; L-histidine degradation into L-glutamate; N-formimidoyl-L-glutamate from L-histidine: step 2/3. Its function is as follows. Catalyzes the conversion of urocanate to 4-imidazolone-5-propionate. This Pseudomonas putida (strain GB-1) protein is Urocanate hydratase.